The following is a 239-amino-acid chain: Diablo IAP-binding mitochondrial protein (239 aa).

The N-terminal 21 residues, 1-21 (MAALKSWLSRSVTSFFRYRQC), are a transit peptide targeting the mitochondrion. The short motif at 56–60 (AVPIA) is the IAP-binding element. Residues 217–239 (RQKTQEEGEERAESEQEAYLRED) form a disordered region.

Belongs to the Smac/DIABLO protein family. As to quaternary structure, homodimer. Interacts with BIRC2/c-IAP1 (via BIR3 domain). Interacts with BIRC6/BRUCE; inhibits BIRC6 activity. Interacts with BIRC7/livin. Interacts with XIAP/BIRC4 (via BIR3 domain). Interacts with the monomeric and dimeric form of BIRC5/survivin. Interacts with AREL1 (via HECT domain); in the cytoplasm following induction of apoptosis. Interacts with BEX3. Post-translationally, ubiquitinated by BIRC7/livin. Ubiquitinated by BIRC6. In terms of processing, the precursor form is proteolytically cleaved by mitochondrial processing peptidase MPP to remove the transit peptide and produce an intermediate form. This is then processed by PARL to produce the mature cleaved form which is released from mitochondria into the cytosol in apoptotic cells. Ubiquitously expressed with highest expression in testis. Expression is also high in heart, liver, kidney, spleen, prostate and ovary. Low in brain, lung, thymus and peripheral blood leukocytes. Isoform 3 is ubiquitously expressed.

Its subcellular location is the mitochondrion. The protein localises to the cytoplasm. It localises to the cytosol. Its function is as follows. Promotes apoptosis by activating caspases in the cytochrome c/Apaf-1/caspase-9 pathway. Acts by opposing the inhibitory activity of inhibitor of apoptosis proteins (IAP). Inhibits the activity of BIRC6/BRUCE by inhibiting its binding to caspases. In terms of biological role, attenuates the stability and apoptosis-inhibiting activity of XIAP/BIRC4 by promoting XIAP/BIRC4 ubiquitination and degradation through the ubiquitin-proteasome pathway. Also disrupts XIAP/BIRC4 interacting with processed caspase-9 and promotes caspase-3 activation. Defective in the capacity to down-regulate the XIAP/BIRC4 abundance. This Homo sapiens (Human) protein is Diablo IAP-binding mitochondrial protein.